The primary structure comprises 379 residues: RIB43A-like with coiled-coils protein 1 (379 aa).

The disordered stretch occupies residues 1 to 21; it reads MYNINQSTDTKEAAAIEARRN. The span at 9–21 shows a compositional bias: basic and acidic residues; that stretch reads DTKEAAAIEARRN. Coiled-coil stretches lie at residues 85-111, 161-241, and 280-304; these read ADRTRRLAKKVQEFREQKQQLKNGREF, RYNL…KANL, and EQRAAIRKEQEVQRSKKEAHRQAEK.

The protein belongs to the RIB43A family. In terms of assembly, microtubule inner protein component of sperm flagellar doublet microtubules.

It localises to the cytoplasm. The protein resides in the cytoskeleton. Its subcellular location is the flagellum axoneme. The sequence is that of RIB43A-like with coiled-coils protein 1 (RIBC1) from Macaca fascicularis (Crab-eating macaque).